The chain runs to 533 residues: Putative phosphate permease HP_1491 (533 aa).

The next 12 helical transmembrane spans lie at Ile23 to Ala43, Gly47 to Asn67, Ala81 to Ile101, Val129 to Ala149, Ser156 to Trp176, Ile182 to Met202, Val221 to Val241, Leu248 to Phe268, Ile286 to Gly306, Val338 to Gly358, Leu372 to Ser392, and Leu509 to Ile529.

It belongs to the inorganic phosphate transporter (PiT) (TC 2.A.20) family.

It localises to the cell membrane. Functionally, potential transporter for phosphate. This is Putative phosphate permease HP_1491 from Helicobacter pylori (strain ATCC 700392 / 26695) (Campylobacter pylori).